A 119-amino-acid chain; its full sequence is Large ribosomal subunit protein bL20 (119 aa).

This sequence belongs to the bacterial ribosomal protein bL20 family.

In terms of biological role, binds directly to 23S ribosomal RNA and is necessary for the in vitro assembly process of the 50S ribosomal subunit. It is not involved in the protein synthesizing functions of that subunit. The protein is Large ribosomal subunit protein bL20 of Shouchella clausii (strain KSM-K16) (Alkalihalobacillus clausii).